We begin with the raw amino-acid sequence, 119 residues long: Ribonuclease P protein component (119 aa).

This sequence belongs to the RnpA family. Consists of a catalytic RNA component (M1 or rnpB) and a protein subunit.

The enzyme catalyses Endonucleolytic cleavage of RNA, removing 5'-extranucleotides from tRNA precursor.. Functionally, RNaseP catalyzes the removal of the 5'-leader sequence from pre-tRNA to produce the mature 5'-terminus. It can also cleave other RNA substrates such as 4.5S RNA. The protein component plays an auxiliary but essential role in vivo by binding to the 5'-leader sequence and broadening the substrate specificity of the ribozyme. This Sodalis glossinidius (strain morsitans) protein is Ribonuclease P protein component.